Here is a 100-residue protein sequence, read N- to C-terminus: NAD(P)H-quinone oxidoreductase subunit 4L, chloroplastic (100 aa).

A run of 3 helical transmembrane segments spans residues 1-21, 29-49, and 60-80; these read MLEH…FGLI, ALMC…TFSN, and IFAI…LAIV.

The protein belongs to the complex I subunit 4L family. NDH is composed of at least 16 different subunits, 5 of which are encoded in the nucleus.

It is found in the plastid. The protein resides in the chloroplast thylakoid membrane. The catalysed reaction is a plastoquinone + NADH + (n+1) H(+)(in) = a plastoquinol + NAD(+) + n H(+)(out). It carries out the reaction a plastoquinone + NADPH + (n+1) H(+)(in) = a plastoquinol + NADP(+) + n H(+)(out). Functionally, NDH shuttles electrons from NAD(P)H:plastoquinone, via FMN and iron-sulfur (Fe-S) centers, to quinones in the photosynthetic chain and possibly in a chloroplast respiratory chain. The immediate electron acceptor for the enzyme in this species is believed to be plastoquinone. Couples the redox reaction to proton translocation, and thus conserves the redox energy in a proton gradient. This chain is NAD(P)H-quinone oxidoreductase subunit 4L, chloroplastic, found in Physcomitrium patens (Spreading-leaved earth moss).